A 294-amino-acid polypeptide reads, in one-letter code: Putative lipid kinase SP_1045 (294 aa).

One can recognise a DAGKc domain in the interval 1–131 (MKKAMVIINP…IDIGKANDNY (131 aa)). ATP contacts are provided by residues 9–13 (NPTSG), T40, 66–72 (GDGTVNE), and T93. Residues D212 and Y214 each coordinate Mg(2+). Residue D269 is the Proton acceptor of the active site.

Belongs to the diacylglycerol/lipid kinase family. Requires Mg(2+) as cofactor.

In terms of biological role, may catalyze the ATP-dependent phosphorylation of lipids other than diacylglycerol (DAG). In fact, is not able to exhibit diacylglycerol kinase activity in vitro. This chain is Putative lipid kinase SP_1045, found in Streptococcus pneumoniae serotype 4 (strain ATCC BAA-334 / TIGR4).